The chain runs to 205 residues: Holliday junction branch migration complex subunit RuvA (205 aa).

The segment at methionine 1–histidine 64 is domain I. The tract at residues glutamate 65–threonine 143 is domain II. A flexible linker region spans residues leucine 144 to serine 153. Residues glycine 154 to lysine 205 are domain III.

This sequence belongs to the RuvA family. As to quaternary structure, homotetramer. Forms an RuvA(8)-RuvB(12)-Holliday junction (HJ) complex. HJ DNA is sandwiched between 2 RuvA tetramers; dsDNA enters through RuvA and exits via RuvB. An RuvB hexamer assembles on each DNA strand where it exits the tetramer. Each RuvB hexamer is contacted by two RuvA subunits (via domain III) on 2 adjacent RuvB subunits; this complex drives branch migration. In the full resolvosome a probable DNA-RuvA(4)-RuvB(12)-RuvC(2) complex forms which resolves the HJ.

It localises to the cytoplasm. Functionally, the RuvA-RuvB-RuvC complex processes Holliday junction (HJ) DNA during genetic recombination and DNA repair, while the RuvA-RuvB complex plays an important role in the rescue of blocked DNA replication forks via replication fork reversal (RFR). RuvA specifically binds to HJ cruciform DNA, conferring on it an open structure. The RuvB hexamer acts as an ATP-dependent pump, pulling dsDNA into and through the RuvAB complex. HJ branch migration allows RuvC to scan DNA until it finds its consensus sequence, where it cleaves and resolves the cruciform DNA. This chain is Holliday junction branch migration complex subunit RuvA, found in Pseudomonas putida (strain W619).